Here is a 239-residue protein sequence, read N- to C-terminus: 7-cyano-7-deazaguanine synthase (239 aa).

16–26 lines the ATP pocket; the sequence is FSGGQDSTTCL. Positions 204, 219, 222, and 225 each coordinate Zn(2+).

This sequence belongs to the QueC family. Zn(2+) serves as cofactor.

It carries out the reaction 7-carboxy-7-deazaguanine + NH4(+) + ATP = 7-cyano-7-deazaguanine + ADP + phosphate + H2O + H(+). It functions in the pathway purine metabolism; 7-cyano-7-deazaguanine biosynthesis. Functionally, catalyzes the ATP-dependent conversion of 7-carboxy-7-deazaguanine (CDG) to 7-cyano-7-deazaguanine (preQ(0)). This chain is 7-cyano-7-deazaguanine synthase, found in Polaromonas naphthalenivorans (strain CJ2).